We begin with the raw amino-acid sequence, 523 residues long: Tryptamine 5-hydroxylase (523 aa).

A helical transmembrane segment spans residues 5–25 (MASTMSLALLVLSAAYVLVAL). Cys-453 serves as a coordination point for heme.

The protein belongs to the cytochrome P450 family. Heme is required as a cofactor.

It is found in the endoplasmic reticulum membrane. It catalyses the reaction tryptamine + reduced [NADPH--hemoprotein reductase] + O2 = serotonin + oxidized [NADPH--hemoprotein reductase] + H2O + H(+). Its function is as follows. Involved in serotonin biosynthesis. Catalyzes the conversion of tryptamine to serotonin. Accumulation of serotonin may play a role in innate immunity. In Oryza sativa subsp. japonica (Rice), this protein is Tryptamine 5-hydroxylase.